Reading from the N-terminus, the 603-residue chain is Protein Spindly (603 aa).

Position 1 is an N-acetylmethionine (Met-1). Positions 1 to 442 form a coiled coil; that stretch reads MESDVIADLR…LKLKYEPEEK (442 aa). Residues Ser-513 and Ser-553 each carry the phosphoserine modification. The disordered stretch occupies residues 542–577; it reads ALSERSRNTPNSPRLAAESRLQREVKQGKETASKLE. The segment covering 561–577 has biased composition (basic and acidic residues); sequence RLQREVKQGKETASKLE.

The protein belongs to the Spindly family. In terms of assembly, interacts with KNTC1 and ZW10. These interactions appear weak and may be transient or indirect. Interacts with dynein intermediate chain and dynactin (DCTN1). Interacts with the catalytically active form of USP45. In terms of processing, monoubiquitinated with'Lys-48' linkage. Deubiquitinated by USP45.

Its subcellular location is the cytoplasm. The protein resides in the cytoskeleton. The protein localises to the microtubule organizing center. It is found in the centrosome. It localises to the chromosome. Its subcellular location is the centromere. The protein resides in the kinetochore. The protein localises to the nucleus. It is found in the spindle pole. Its function is as follows. Required for the localization of dynein and dynactin to the mitotic kintochore. Dynein is believed to control the initial lateral interaction between the kinetochore and spindle microtubules and to facilitate the subsequent formation of end-on kinetochore-microtubule attachments mediated by the NDC80 complex. Also required for correct spindle orientation. Does not appear to be required for the removal of spindle assembly checkpoint (SAC) proteins from the kinetochore upon bipolar spindle attachment. Acts as an adapter protein linking the dynein motor complex to various cargos and converts dynein from a non-processive to a highly processive motor in the presence of dynactin. Facilitates the interaction between dynein and dynactin and activates dynein processivity (the ability to move along a microtubule for a long distance without falling off the track). Plays a role in cell migration. The chain is Protein Spindly from Bos taurus (Bovine).